The primary structure comprises 654 residues: MAAAALGSSSGSASPAVAELCQNTPETFLEASKLLLTYADNILRNPNDEKYRSIRIGNTAFSTRLLPVRGAVECLFEMGFEEGETHLIFPKKASVEQLQKIRDLIAIERSSRLDGSNKSHKVKSSQQPAASTQLPTTPSSNPSGLNQHTRNRQGQSSDPPSASTVAADSAILEVLQSNIQHVLVYENPALQEKALACIPVQELKRKSQEKLSRARKLDKGINISDEDFLLLELLHWFKEEFFHWVNNVLCSKCGGQTRSRDRSLLPSDDELKWGAKEVEDHYCDACQFSNRFPRYNNPEKLLETRCGRCGEWANCFTLCCRAVGFEARYVWDYTDHVWTEVYSPSQQRWLHCDACEDVCDKPLLYEIGWGKKLSYVIAFSKDEVVDVTWRYSCKHEEVIARRTKVKEALLRDTINGLNKQRQLFLSENRRKELLQRIIVELVEFISPKTPKPGELGGRISGSVAWRVARGEMGLQRKETLFIPCENEKISKQLHLCYNIVKDRYVRVSNNNQTISGWENGVWKMESIFRKVETDWHMVYLARKEGSSFAYISWKFECGSVGLKVDSISIRTSSQTFQTGTVEWKLRSDTAQVELTGDNSLHSYADFSGATEVILEAELSRGDGDVAWQHTQLFRQSLNDHEENCLEIIIKFSDL.

The residue at position 2 (alanine 2) is an N-acetylalanine. The region spanning 30–91 (EASKLLLTYA…EGETHLIFPK (62 aa)) is the PUB domain. The tract at residues 112-163 (RLDGSNKSHKVKSSQQPAASTQLPTTPSSNPSGLNQHTRNRQGQSSDPPSAS) is disordered. The span at 124 to 163 (SSQQPAASTQLPTTPSSNPSGLNQHTRNRQGQSSDPPSAS) shows a compositional bias: polar residues. Phosphothreonine is present on threonine 137. Zn(2+) is bound by residues cysteine 250, cysteine 253, cysteine 283, and cysteine 286. Catalysis depends on cysteine 309, which acts as the Nucleophile. Residues histidine 336 and aspartate 353 contribute to the active site. One can recognise a PAW domain in the interval 454–654 (ELGGRISGSV…LEIIIKFSDL (201 aa)).

It belongs to the transglutaminase-like superfamily. PNGase family. In terms of assembly, component of a complex required to couple retrotranslocation, ubiquitination and deglycosylation composed of NGLY1, SAKS1, AMFR, VCP and RAD23B. Interacts with the proteasome components RAD23B and PSMC1. Interacts with directly with VCP. Interacts with DERL1, bringing it close to the endoplasmic reticulum membrane. Interacts with SAKS1. It depends on Zn(2+) as a cofactor.

Its subcellular location is the cytoplasm. It catalyses the reaction Hydrolysis of an N(4)-(acetyl-beta-D-glucosaminyl)asparagine residue in which the glucosamine residue may be further glycosylated, to yield a (substituted) N-acetyl-beta-D-glucosaminylamine and a peptide containing an aspartate residue.. Inhibited by Z-VAD-fmk, a well-known caspase inhibitor, which inhibits enzyme activity through covalent binding of the carbohydrate to the single Cys-306 residue. In terms of biological role, specifically deglycosylates the denatured form of N-linked glycoproteins in the cytoplasm and assists their proteasome-mediated degradation. Cleaves the beta-aspartyl-glucosamine (GlcNAc) of the glycan and the amide side chain of Asn, converting Asn to Asp. Prefers proteins containing high-mannose over those bearing complex type oligosaccharides. Can recognize misfolded proteins in the endoplasmic reticulum that are exported to the cytosol to be destroyed and deglycosylate them, while it has no activity toward native proteins. Deglycosylation is a prerequisite for subsequent proteasome-mediated degradation of some, but not all, misfolded glycoproteins. This Homo sapiens (Human) protein is Peptide-N(4)-(N-acetyl-beta-glucosaminyl)asparagine amidase (NGLY1).